The chain runs to 125 residues: Small ribosomal subunit protein uS13 (125 aa).

The tract at residues 92–125 (RRSLPVRGQRTRTNARTRKGKRKTVAGKKKAVKK) is disordered.

This sequence belongs to the universal ribosomal protein uS13 family. In terms of assembly, part of the 30S ribosomal subunit. Forms a loose heterodimer with protein S19. Forms two bridges to the 50S subunit in the 70S ribosome.

In terms of biological role, located at the top of the head of the 30S subunit, it contacts several helices of the 16S rRNA. In the 70S ribosome it contacts the 23S rRNA (bridge B1a) and protein L5 of the 50S subunit (bridge B1b), connecting the 2 subunits; these bridges are implicated in subunit movement. Contacts the tRNAs in the A and P-sites. The protein is Small ribosomal subunit protein uS13 of Pelodictyon phaeoclathratiforme (strain DSM 5477 / BU-1).